The sequence spans 265 residues: Chlorophyll a-b binding protein 1A, chloroplastic (265 aa).

The transit peptide at 1 to 34 directs the protein to the chloroplast; the sequence is MAAAAMALSSPSFAGQAVKLSPSASENSGNGRIT. A helical membrane pass occupies residues 151-171; sequence LVHAQSILAIWACQVVLMGAV. Valine 152, serine 156, glutamine 164, glutamate 172, arginine 175, and leucine 181 together coordinate chlorophyll b. Lysine 212, glutamate 213, asparagine 216, arginine 218, glutamine 230, histidine 245, and alanine 254 together coordinate chlorophyll a. The helical transmembrane segment at 219-239 threads the bilayer; it reads LAMFSMFGFFVQAIVTGKGPL. Phenylalanine 261 serves as a coordination point for chlorophyll b.

The protein belongs to the light-harvesting chlorophyll a/b-binding (LHC) protein family. As to quaternary structure, the LHC complex consists of chlorophyll a-b binding proteins. Binds at least 14 chlorophylls (8 Chl-a and 6 Chl-b) and carotenoids such as lutein and neoxanthin. serves as cofactor. In terms of processing, photoregulated by reversible phosphorylation of its threonine residues.

It localises to the plastid. The protein localises to the chloroplast thylakoid membrane. The light-harvesting complex (LHC) functions as a light receptor, it captures and delivers excitation energy to photosystems with which it is closely associated. The polypeptide is Chlorophyll a-b binding protein 1A, chloroplastic (CAB1A) (Solanum lycopersicum (Tomato)).